The sequence spans 525 residues: Probable protein kinase UbiB (525 aa).

The region spanning 118–500 (EFERVPVASA…QRRTNRLLQA (383 aa)) is the Protein kinase domain. ATP contacts are provided by residues 124-132 (VASASIAQV) and Lys-150. Asp-285 serves as the catalytic Proton acceptor. Residues 501–521 (LLVFGLAVGAGAVIARVLIVL) traverse the membrane as a helical segment.

The protein belongs to the ABC1 family. UbiB subfamily.

It is found in the cell inner membrane. It functions in the pathway cofactor biosynthesis; ubiquinone biosynthesis [regulation]. Functionally, is probably a protein kinase regulator of UbiI activity which is involved in aerobic coenzyme Q (ubiquinone) biosynthesis. This Burkholderia mallei (strain SAVP1) protein is Probable protein kinase UbiB.